Consider the following 424-residue polypeptide: Glutamyl-tRNA reductase (424 aa).

Substrate contacts are provided by residues threonine 49–arginine 52, serine 108, glutamate 113–glutamine 115, and glutamine 119. The active-site Nucleophile is the cysteine 50. Glycine 188–isoleucine 193 provides a ligand contact to NADP(+).

Belongs to the glutamyl-tRNA reductase family. Homodimer.

It catalyses the reaction (S)-4-amino-5-oxopentanoate + tRNA(Glu) + NADP(+) = L-glutamyl-tRNA(Glu) + NADPH + H(+). Its pathway is porphyrin-containing compound metabolism; protoporphyrin-IX biosynthesis; 5-aminolevulinate from L-glutamyl-tRNA(Glu): step 1/2. Catalyzes the NADPH-dependent reduction of glutamyl-tRNA(Glu) to glutamate 1-semialdehyde (GSA). The sequence is that of Glutamyl-tRNA reductase from Hahella chejuensis (strain KCTC 2396).